The chain runs to 472 residues: Doublesex- and mab-3-related transcription factor 3 (472 aa).

The segment at residues 29-76 (CARCRNHGVLSWLKGHKRYCRFKDCTCEKCILIIERQRVMAAQVALRR) is a DNA-binding region (DM). 2 disordered regions span residues 89–128 (DSLR…AELA) and 155–191 (EERL…GCFT). A compositionally biased stretch (pro residues) spans 95–123 (PGPPPPGDAVAAPQPPPASQPSQPQPPRP). Over residues 155-179 (EERLGDGKSADNTEVFSDKDTDQRS) the composition is skewed to basic and acidic residues. A DMA domain is found at 249–284 (RPPLEVLKKIFPNQKPTVLELILKGCGGDLVSAVEV). Positions 430-472 (TEDPRISIPDDGCPFVSKQSIYTEDDYDERSDSSDSRTLNTSS) are disordered.

This sequence belongs to the DMRT family. In terms of assembly, may homodimerize. In terms of tissue distribution, expressed in testis.

The protein resides in the nucleus. Functionally, probable transcription factor that plays a role in configuring the spinal circuits controlling stride in vertebrates. Involved in neuronal specification within specific subdivision of spinal cord neurons and in the development of a coordinated locomotor network controlling limb movements. May regulate transcription during sexual development. The sequence is that of Doublesex- and mab-3-related transcription factor 3 (DMRT3) from Homo sapiens (Human).